Here is a 477-residue protein sequence, read N- to C-terminus: Mitochondrial adenyl nucleotide antiporter SLC25A24 (477 aa).

The interval 1–173 (MLRWLRGFVL…RFWKHSTGID (173 aa)) is regulatory N-terminal domain. At 1 to 197 (MLRWLRGFVL…EKKSGQWWRQ (197 aa)) the chain is on the mitochondrial intermembrane side. 4 EF-hand domains span residues 19-54 (EPPTRYETLFQKLDRNGDGVVDISELQEGLKSLGIP), 61-85 (EKIFTTGDVNKDGKLDFEEFMKYLK), 86-121 (DHEKKMKLAFKSLDKNNDGKIEASEIVQSLQILGLT), and 122-157 (ISEQQAELILQSIDADGTMTVDWNEWRDYFLFNPVT). Residues Asp32, Asn34, Asp36, Val38, Glu43, Asp68, Asn70, Asp72, Lys74, Glu79, Asp99, Asn101, Asp103, Lys105, Glu110, Asp135, Asp137, Thr139, Thr141, and Glu146 each contribute to the Ca(2+) site. Positions 159-168 (IEEIIRFWKH) are linker region. Positions 174 to 477 (IGDSLTIPDE…MKQTLGVTQK (304 aa)) are C-terminal transmembrane transporter domain. 3 Solcar repeats span residues 192–278 (GQWW…YKKL), 286–371 (IGTF…LKSH), and 383–471 (PGVM…MKQT). A helical transmembrane segment spans residues 198-215 (LLAGGVAGAVSRTSTAPL). At 216–252 (DRLKVMMQVHGSKSAKMNIYGGFQQMVKEGGIRSLWR) the chain is on the mitochondrial matrix side. A helical transmembrane segment spans residues 253-272 (GNGTNVIKIAPETAVKFWAY). Topologically, residues 273–295 (EQYKKLLTEEGQKIGTFERFVSG) are mitochondrial intermembrane. The helical transmembrane segment at 296–309 (SMAGATAQTFIYPM) threads the bilayer. The Mitochondrial matrix portion of the chain corresponds to 310–345 (EVLKTRLAVGKTGQYSGMFDCAKKILKYEGMGAFYK). An N6-acetyllysine; alternate modification is found at Lys320. Position 320 is an N6-succinyllysine; alternate (Lys320). Lys336 is subject to N6-acetyllysine. A helical membrane pass occupies residues 346–365 (GYVPNLLGIIPYAGIDLAVY). Topologically, residues 366–388 (ELLKSHWLDNFAKDSVNPGVMVL) are mitochondrial intermembrane. Residues 389-406 (LGCGALSSTCGQLASYPL) form a helical membrane-spanning segment. Residues 407-445 (ALVRTRMQAQAMIEKSPQLNMVGLFRRILSKEGLPGLYR) are Mitochondrial matrix-facing. Lys437 is modified (N6-acetyllysine; alternate). Lys437 carries the post-translational modification N6-succinyllysine; alternate. A helical transmembrane segment spans residues 446–465 (GITPNFMKVLPAVGISYVVY). At 466-477 (ENMKQTLGVTQK) the chain is on the mitochondrial intermembrane side.

This sequence belongs to the mitochondrial carrier (TC 2.A.29) family. As to quaternary structure, monomer.

The protein localises to the mitochondrion inner membrane. It catalyses the reaction Mg(2+)(out) + phosphate(in) + ATP(out) = Mg(2+)(in) + phosphate(out) + ATP(in). The catalysed reaction is ADP(out) + phosphate(in) + H(+)(out) = ADP(in) + phosphate(out) + H(+)(in). It carries out the reaction AMP(out) + phosphate(in) = AMP(in) + phosphate(out). The enzyme catalyses phosphate(in) + ATP(out) + 2 H(+)(out) = phosphate(out) + ATP(in) + 2 H(+)(in). It catalyses the reaction dADP(in) + ADP(out) = dADP(out) + ADP(in). The catalysed reaction is Mg(2+)(in) + ADP(out) + ATP(in) + H(+)(out) = Mg(2+)(out) + ADP(in) + ATP(out) + H(+)(in). It carries out the reaction ADP(out) + diphosphate(in) = ADP(in) + diphosphate(out). The enzyme catalyses dAMP(in) + ADP(out) + H(+)(out) = dAMP(out) + ADP(in) + H(+)(in). It catalyses the reaction 3'-AMP(in) + ADP(out) + H(+)(out) = 3'-AMP(out) + ADP(in) + H(+)(in). The catalysed reaction is dAMP(out) + phosphate(in) = dAMP(in) + phosphate(out). It carries out the reaction 3'-AMP(out) + phosphate(in) = 3'-AMP(in) + phosphate(out). The enzyme catalyses dADP(out) + phosphate(in) + H(+)(out) = dADP(in) + phosphate(out) + H(+)(in). Activated by an increase in cytosolic calcium levels that induce a conformational change of the N-terminal regulatory domain, uncapping the channel and allowing transport. Inhibited by bathophenanthroline, mersalyl, p-hydroxymercuribenzoate, bromcresol purple and tannic acid. In terms of biological role, electroneutral antiporter that mediates the transport of adenyl nucleotides through the inner mitochondrial membrane. Originally identified as an ATP-magnesium/inorganic phosphate antiporter, it also acts as a broad specificity adenyl nucleotide antiporter. By regulating the mitochondrial matrix adenyl nucleotide pool could adapt to changing cellular energetic demands and indirectly regulate adenyl nucleotide-dependent metabolic pathways. In vitro, a low activity is also observed with guanyl and pyrimidine nucleotides. May play a role in protecting cells against oxidative stress-induced cell death, by buffering calcium levels in the mitochondrial matrix through the formation of calcium-phosphate precipitates. This Bos taurus (Bovine) protein is Mitochondrial adenyl nucleotide antiporter SLC25A24 (SLC25A24).